The following is a 287-amino-acid chain: Movement protein (287 aa).

The protein belongs to the nucleorhabdovirus type-1 movement protein family.

Functionally, transports viral genome to neighboring plant cells directly through plasmosdesmata, without any budding. The movement protein allows efficient cell to cell propagation, by bypassing the host cell wall barrier. This Colocasia esculenta (Wild taro) protein is Movement protein (3).